The chain runs to 454 residues: Growth/differentiation factor 9 (454 aa).

Positions 1-24 (MARPNKFLLWFCCFAWLCFPISLG) are cleaved as a signal peptide. Residues 25–319 (SQASGGEAQI…GRSSHHRHRR (295 aa)) constitute a propeptide that is removed on maturation. N-linked (GlcNAc...) asparagine glycans are attached at residues N106, N163, N236, N255, and N268. Residues 303-330 (GEEAAEDGRSSHHRHRRGQETVSSELKK) form a disordered region. A Phosphoserine; by CK modification is found at S325. Residue N338 is glycosylated (N-linked (GlcNAc...) asparagine). 3 disulfide bridges follow: C353–C419, C382–C451, and C386–C453.

This sequence belongs to the TGF-beta family. In terms of assembly, homodimer or heterodimer (Potential). But, in contrast to other members of this family, cannot be disulfide-linked. In terms of processing, phosphorylated; phosphorylation is critical for GDF9 function. In vitro, can be phosphorylated by CK at Ser-325. Expressed in ovarian granulosa cells. Present in oocytes of primary follicles (at protein level).

It is found in the secreted. Its function is as follows. Required for ovarian folliculogenesis. Promotes primordial follicle development. Stimulates granulosa cell proliferation. Promotes cell transition from G0/G1 to S and G2/M phases, through an increase of CCND1 and CCNE1 expression, and RB1 phosphorylation. It regulates STAR expression and cAMP-dependent progesterone release in granulosa and thecal cells. Attenuates the suppressive effects of activin A on STAR expression and progesterone production by increasing the expression of inhibin B. It suppresses FST and FSTL3 production in granulosa-lutein cells. In Homo sapiens (Human), this protein is Growth/differentiation factor 9 (GDF9).